Reading from the N-terminus, the 428-residue chain is 3-phosphoshikimate 1-carboxyvinyltransferase (428 aa).

3-phosphoshikimate contacts are provided by K21, S22, and R26. Residue K21 participates in phosphoenolpyruvate binding. G91 and R119 together coordinate phosphoenolpyruvate. Residues S164, Q166, D313, and K340 each coordinate 3-phosphoshikimate. Q166 is a binding site for phosphoenolpyruvate. The active-site Proton acceptor is the D313. 2 residues coordinate phosphoenolpyruvate: R344 and R386.

It belongs to the EPSP synthase family. As to quaternary structure, monomer.

The protein localises to the cytoplasm. The enzyme catalyses 3-phosphoshikimate + phosphoenolpyruvate = 5-O-(1-carboxyvinyl)-3-phosphoshikimate + phosphate. The protein operates within metabolic intermediate biosynthesis; chorismate biosynthesis; chorismate from D-erythrose 4-phosphate and phosphoenolpyruvate: step 6/7. Catalyzes the transfer of the enolpyruvyl moiety of phosphoenolpyruvate (PEP) to the 5-hydroxyl of shikimate-3-phosphate (S3P) to produce enolpyruvyl shikimate-3-phosphate and inorganic phosphate. The polypeptide is 3-phosphoshikimate 1-carboxyvinyltransferase (Campylobacter jejuni subsp. jejuni serotype O:2 (strain ATCC 700819 / NCTC 11168)).